Here is a 78-residue protein sequence, read N- to C-terminus: Chassatide C4 (78 aa).

Positions 1–23 (MAKFATQLFLLTASVVMLEVQSS) are cleaved as a signal peptide. The propeptide at 24 to 42 (IVIMQDPDLGRKLIMNPAN) is removed in mature form. Residues 43 to 71 (GASCGETCFTGICFTAGCSCNPWPTCTRN) constitute a cross-link (cyclopeptide (Gly-Asn)). 3 disulfide bridges follow: Cys46/Cys60, Cys50/Cys62, and Cys55/Cys68. A propeptide spans 72–78 (GLNPESI) (removed in mature form).

In terms of processing, this is a cyclic peptide.

Its function is as follows. Probably participates in a plant defense mechanism. The protein is Chassatide C4 of Chassalia chartacea (Chassalia curviflora).